Here is a 314-residue protein sequence, read N- to C-terminus: Diisopropyl-fluorophosphatase (314 aa).

Positions 21, 120, 175, 229, 232, 273, and 274 each coordinate Ca(2+). The active-site Proton acceptor is histidine 287.

Monomer. Requires Ca(2+) as cofactor.

The catalysed reaction is diisopropyl fluorophosphate + H2O = diisopropyl phosphate + fluoride + 2 H(+). With respect to regulation, inhibited by chelating agents. Its function is as follows. Biological function and substrate unknown. However, it is capable of acting on phosphorus anhydride bonds (such as phosphorus-halide and phosphorus-cyanide) in organophosphorus compounds (including nerve gases). In Loligo vulgaris (Common European squid), this protein is Diisopropyl-fluorophosphatase.